The chain runs to 349 residues: Anthranilate phosphoribosyltransferase (349 aa).

5-phospho-alpha-D-ribose 1-diphosphate is bound by residues glycine 82, 85 to 86, 92 to 95, 110 to 118, and serine 122; these read GD, NVST, and KHGNRGVSS. Residue glycine 82 participates in anthranilate binding. Mg(2+) is bound at residue serine 94. Asparagine 113 contributes to the anthranilate binding site. Anthranilate is bound at residue arginine 168. Residues aspartate 227 and glutamate 228 each contribute to the Mg(2+) site.

The protein belongs to the anthranilate phosphoribosyltransferase family. As to quaternary structure, homodimer. Requires Mg(2+) as cofactor.

It catalyses the reaction N-(5-phospho-beta-D-ribosyl)anthranilate + diphosphate = 5-phospho-alpha-D-ribose 1-diphosphate + anthranilate. Its pathway is amino-acid biosynthesis; L-tryptophan biosynthesis; L-tryptophan from chorismate: step 2/5. Functionally, catalyzes the transfer of the phosphoribosyl group of 5-phosphorylribose-1-pyrophosphate (PRPP) to anthranilate to yield N-(5'-phosphoribosyl)-anthranilate (PRA). This Acinetobacter baylyi (strain ATCC 33305 / BD413 / ADP1) protein is Anthranilate phosphoribosyltransferase.